Here is a 237-residue protein sequence, read N- to C-terminus: Proteasome subunit beta type-1-B (237 aa).

It belongs to the peptidase T1B family. The 26S proteasome consists of a 20S proteasome core and two 19S regulatory subunits. The 20S proteasome core is composed of 28 subunits that are arranged in four stacked rings, resulting in a barrel-shaped structure. The two end rings are each formed by seven alpha subunits, and the two central rings are each formed by seven beta subunits. The catalytic chamber with the active sites is on the inside of the barrel.

It is found in the cytoplasm. The protein localises to the nucleus. Its function is as follows. Non-catalytic component of the proteasome, a multicatalytic proteinase complex which is characterized by its ability to cleave peptides with Arg, Phe, Tyr, Leu, and Glu adjacent to the leaving group at neutral or slightly basic pH. The proteasome has an ATP-dependent proteolytic activity. In Carassius auratus (Goldfish), this protein is Proteasome subunit beta type-1-B (psmb1-B).